The sequence spans 22 residues: Chlorophyllase type 1 (22 aa).

The protein belongs to the AB hydrolase superfamily. Lipase family.

The catalysed reaction is a chlorophyll + H2O = a chlorophyllide + phytol + H(+). The protein operates within porphyrin-containing compound metabolism; chlorophyll degradation. Its function is as follows. Catalyzes the hydrolysis of ester bond in chlorophyll to yield chlorophyllide and phytol. The chain is Chlorophyllase type 1 from Chenopodium album (Fat hen).